The sequence spans 1160 residues: Nonribosomal peptide synthetase fmqC (1160 aa).

The segment at 132–520 is adenylation; it reads TYRELNDRSS…LGEVEHALQQ (389 aa). The Carrier domain maps to 642–719; sequence QPVTQLEESL…EMAGMLDGVT (78 aa). Position 679 is an O-(pantetheine 4'-phosphoryl)serine (Ser679). A condensation region spans residues 749-1025; it reads CTLEDLQEGF…CAAAETPMRI (277 aa).

Belongs to the NRP synthetase family. Interacts with the mitogen-activated protein kinase mpkA. Post-translationally, phosphorylated by mpkA during conidiogenesis.

The protein resides in the cytoplasm. It participates in alkaloid biosynthesis. In terms of biological role, nonribosomal peptide synthetase; part of the gene cluster that mediates the biosynthesis of the antitumor fumiquinazolines that confer a dual-usage capability to defend against phagocytes in the environment and animal hosts. The simplest member is fumiquinazoline F (FQF) with a 6-6-6 tricyclic core derived from anthranilic acid (Ant), tryptophan (Trp), and alanine (Ala). The trimodular NRPS fmqA is responsible for FQF formation. Modules 1, 2 and 3 of fmqA are predicted to activate and load Ant, Trp and Ala, respectively, providing for the assembly of an Ant-Trp-Ala-S-enzyme intermediate that would undergo double cyclization for chain release and generation of the tricyclic 6-6-6 product fumiquinazoline F. The presence of an E domain predicted for module 2 of fmqA is consistent with epimerization of L-Trp to D-Trp during assembly to generate the R-stereocenter at C14 of FQF. The FAD-dependent monooxygenase fmqB and the monomodular NRPS fmqC then maturate FQF to FQA. FmqB oxidizes the 2',3'-double bond of the indole side chain of FQF, and fmqC activates L-Ala as the adenylate, installs it as the pantetheinyl thioester on its carrier protein domain, and acylates the oxidized indole for subsequent intramolecular cyclization to create the 6-5-5-imidazolindolone of FQA. The FAD-linked oxidoreductase fmqD introduces a third layer of scaffold complexity by converting FQA to the spirohemiaminal FQC, presumably by catalyzing the formation of a transient imine within the pyrazinone ring. FQC subsequently converts nonenzymatically to the known cyclic aminal FQD. The chain is Nonribosomal peptide synthetase fmqC from Aspergillus fumigatus (strain ATCC MYA-4609 / CBS 101355 / FGSC A1100 / Af293) (Neosartorya fumigata).